A 1802-amino-acid polypeptide reads, in one-letter code: Bromodomain and WD repeat-containing protein 3 (1802 aa).

WD repeat units lie at residues 170–209 (IKMH…IWAT), 213–251 (RLLA…VWCL), 255–297 (APVA…FWQW), 307–347 (RPVK…IYYL), 353–393 (EKIA…IWQY), 400–452 (SIVL…VWNS), 456–495 (QLLH…IWDL), and 502–542 (RNYF…LFGF). Serine 693 and serine 703 each carry phosphoserine. Residues 768 to 910 (KPSYTTQRND…PKQTRKKKGG (143 aa)) form a disordered region. A compositionally biased stretch (basic residues) spans 785 to 795 (SLRRTQRKRQH). Residues 796–817 (TYQTRSNIEHNSQASCQNSGVQ) show a composition bias toward polar residues. The segment covering 818-829 (EDSDSSSEEDET) has biased composition (acidic residues). The span at 846-859 (SESSSSDSSSEYSD) shows a compositional bias: low complexity. Serine 885 and serine 886 each carry phosphoserine. Positions 889-898 (ENLKSLEERQ) are enriched in basic and acidic residues. The span at 899 to 909 (KKPKQTRKKKG) shows a compositional bias: basic residues. The region spanning 1138-1245 (WGAHSRDEEC…DVLLRFIGDQ (108 aa)) is the Bromo 1 domain. Disordered stretches follow at residues 1262-1292 (RNST…VKCR), 1326-1361 (RQPA…LSED), 1438-1500 (IQSQ…SPVS), and 1520-1725 (SSSS…RAKR). Acidic residues predominate over residues 1266-1278 (DAEEDTEIVDLDS). Residues 1300-1430 (CNPDAWKKQC…ALFESHIKNI (131 aa)) form the Bromo 2 domain. Residues 1441–1453 (QKRRRPRYRKRLR) show a composition bias toward basic residues. Residues 1454–1468 (SSSSSLSSSGAPSPK) are compositionally biased toward low complexity. A compositionally biased stretch (polar residues) spans 1479–1499 (KNDQNTSVSHARTSSPFSSPV). The segment covering 1520-1533 (SSSSFGGYSRSGNS) has biased composition (low complexity). Phosphoserine occurs at positions 1577 and 1579. Residues 1587-1600 (GEDKEKKETKEKSH) are compositionally biased toward basic and acidic residues. A compositionally biased stretch (low complexity) spans 1601-1626 (LSTSESGELGSSLSSESTCGSDSDSE). Basic and acidic residues predominate over residues 1627 to 1643 (STSRTDQDYVDGDHDYS). Composition is skewed to basic residues over residues 1649–1666 (RPKR…RNWK) and 1684–1697 (RGGR…RGSR). Serine 1763 carries the post-translational modification Phosphoserine.

As to expression, found in most adult tissues. Down-regulated in a majority of the B-CLL cases examined.

Its function is as follows. Plays a role in the regulation of cell morphology and cytoskeletal organization. Required in the control of cell shape. In Homo sapiens (Human), this protein is Bromodomain and WD repeat-containing protein 3 (BRWD3).